A 486-amino-acid chain; its full sequence is UDP-N-acetylmuramate--L-alanine ligase (486 aa).

129 to 135 (GTHGKTT) is a binding site for ATP.

This sequence belongs to the MurCDEF family.

Its subcellular location is the cytoplasm. The catalysed reaction is UDP-N-acetyl-alpha-D-muramate + L-alanine + ATP = UDP-N-acetyl-alpha-D-muramoyl-L-alanine + ADP + phosphate + H(+). The protein operates within cell wall biogenesis; peptidoglycan biosynthesis. Cell wall formation. In Vibrio vulnificus (strain YJ016), this protein is UDP-N-acetylmuramate--L-alanine ligase.